A 460-amino-acid polypeptide reads, in one-letter code: Cysteine--tRNA ligase (460 aa).

Cysteine 28 is a binding site for Zn(2+). The 'HIGH' region motif lies at 30-40 (MTVYDYCHLGH). Zn(2+) is bound by residues cysteine 209, histidine 234, and glutamate 238. Positions 266 to 270 (KMSKS) match the 'KMSKS' region motif. Position 269 (lysine 269) interacts with ATP.

The protein belongs to the class-I aminoacyl-tRNA synthetase family. As to quaternary structure, monomer. Zn(2+) serves as cofactor.

The protein localises to the cytoplasm. The enzyme catalyses tRNA(Cys) + L-cysteine + ATP = L-cysteinyl-tRNA(Cys) + AMP + diphosphate. The chain is Cysteine--tRNA ligase from Pseudomonas fluorescens (strain ATCC BAA-477 / NRRL B-23932 / Pf-5).